The chain runs to 675 residues: Vitamin K-dependent protein S (675 aa).

Residues 1–24 (MRVLSVRFRVLLACLALVLPNSET) form the signal peptide. Positions 25–41 (NFLSKERASQVLVRKRR) are excised as a propeptide. In terms of domain architecture, Gla spans 42–87 (ANTLLEETKKGNLERECIEELCNKEEAREVFENNPETDYFYPKYLG). 11 positions are modified to 4-carboxyglutamate: glutamate 47, glutamate 48, glutamate 55, glutamate 57, glutamate 60, glutamate 61, glutamate 66, glutamate 67, glutamate 70, glutamate 73, and glutamate 77. A disulfide bond links cysteine 58 and cysteine 63. Positions 88–116 (CLGAFRVGAFSAARQSANAYPDLRSCVNA) are thrombin-sensitive. Residues 117–155 (IPDQCDPMPCNEDGYLSCKDGQGAFTCICKPGWQGDKCQ) enclose the EGF-like 1 domain. 13 cysteine pairs are disulfide-bonded: cysteine 121-cysteine 134, cysteine 126-cysteine 143, cysteine 145-cysteine 154, cysteine 161-cysteine 175, cysteine 171-cysteine 184, cysteine 186-cysteine 199, cysteine 205-cysteine 217, cysteine 212-cysteine 226, cysteine 228-cysteine 241, cysteine 247-cysteine 256, cysteine 252-cysteine 265, cysteine 267-cysteine 282, and cysteine 449-cysteine 475. The residue at position 136 (aspartate 136) is a (3R)-3-hydroxyaspartate. Residues 157-200 (DINECKDPSNINGGCSQTCDNTPGSYHCSCKIGFAMLTNKKDCK) enclose the EGF-like 2; calcium-binding domain. The 42-residue stretch at 201–242 (DVDECSLKPSVCGTAVCKNIPGDFECECPNGYRYDPSSKSCK) folds into the EGF-like 3; calcium-binding domain. An EGF-like 4; calcium-binding domain is found at 243–283 (DVDECSENTCAQLCVNYPGGYSCYCDGKKGFKLAQDQRSCE). 2 Laminin G-like domains span residues 299-475 (LLYL…NKHC) and 484-665 (YYPG…AHSC). Asparagine 499 and asparagine 509 each carry an N-linked (GlcNAc...) asparagine glycan.

The iron and 2-oxoglutarate dependent 3-hydroxylation of aspartate and asparagine is (R) stereospecific within EGF domains. As to expression, plasma.

It is found in the secreted. Anticoagulant plasma protein; it is a cofactor to activated protein C in the degradation of coagulation factors Va and VIIIa. It helps to prevent coagulation and stimulating fibrinolysis. In Rattus norvegicus (Rat), this protein is Vitamin K-dependent protein S (Pros1).